The sequence spans 285 residues: Probable endonuclease 4 (285 aa).

The Zn(2+) site is built by H69, H109, E145, D179, H182, H216, D229, H231, and E261.

Belongs to the AP endonuclease 2 family. Zn(2+) serves as cofactor.

It carries out the reaction Endonucleolytic cleavage to 5'-phosphooligonucleotide end-products.. Its function is as follows. Endonuclease IV plays a role in DNA repair. It cleaves phosphodiester bonds at apurinic or apyrimidinic (AP) sites, generating a 3'-hydroxyl group and a 5'-terminal sugar phosphate. The polypeptide is Probable endonuclease 4 (Cronobacter sakazakii (strain ATCC BAA-894) (Enterobacter sakazakii)).